The sequence spans 1652 residues: Venom factor (1652 aa).

Positions 1-22 (MEGMALYLVAALLIGFPASSFG) are cleaved as a signal peptide. Mg(2+)-binding residues include proline 519, aspartate 542, valine 543, and aspartate 545. 12 disulfides stabilise this stretch: cysteine 547–cysteine 808, cysteine 616–cysteine 651, cysteine 684–cysteine 711, cysteine 685–cysteine 718, cysteine 698–cysteine 719, cysteine 864–cysteine 1502, cysteine 1347–cysteine 1478, cysteine 1378–cysteine 1447, cysteine 1495–cysteine 1500, cysteine 1507–cysteine 1579, cysteine 1526–cysteine 1650, and cysteine 1626–cysteine 1635. Positions 657–740 (RRRRRSVVLL…REDELFLARS (84 aa)) are excised as a propeptide. The C3a-like domain stretch occupies residues 661-739 (RSVVLLDSKA…KREDELFLAR (79 aa)). Residues 684-719 (CCEDGMHENPMGYSCEKREKYIQEGDACKAAFLECC) enclose the Anaphylatoxin-like domain. The segment at 743–754 (EDEFFGEDNIIS) is factor B binding site. Positions 992–1270 (HLIITPSGCG…VVGFQGLAEY (279 aa)) are excised as a propeptide. The segment at 992 to 1270 (HLIITPSGCG…VVGFQGLAEY (279 aa)) is C3d-like domain. Residues 1000 to 1003 (CGEQ) constitute a cross-link (isoglutamyl cysteine thioester (Cys-Gln)). The factor H binding site stretch occupies residues 1197–1260 (VLMAASTERN…GGTYGQTQAT (64 aa)). An NTR domain is found at 1507–1650 (CSLLNQQKKI…LSNTLTIFGC (144 aa)).

It belongs to the venom complement C3 homolog family. In terms of assembly, heterotrimer of alpha, beta and gamma chains; disulfide-linked. Is active with factor B in the presence of factor D. In terms of processing, first processed by the removal of 4 Arg residues by furin-type protease, forming two chains, alpha and gamma/beta precursor, linked by a disulfide bond. Probably, a cobrin-like protease cleaves the C3a-like domain and then the C3d-like domain, generating the mature venom factor (VF). Expressed by the venom gland.

It is found in the secreted. In terms of biological role, complement-activating protein in venom. It is a structural and functional analog of complement component C3b, the activated form of C3. It binds factor B (CFB), which is subsequently cleaved by factor D (CFD) to form the bimolecular complex VF/Bb. VF/Bb is a C3/C5 convertase that cleaves both complement components C3 and C5. Structurally, it resembles the C3b degradation product C3c, which is not able to form a C3/C5 convertase. Unlike C3b/Bb, VF/Bb is a stable complex and completely resistant to the actions of complement regulatory factors H (CFH) and I (CFI). Therefore, VF continuously activates complement resulting in the depletion of complement activity. This is Venom factor from Crotalus adamanteus (Eastern diamondback rattlesnake).